Here is a 259-residue protein sequence, read N- to C-terminus: Phosphate import ATP-binding protein PstB (259 aa).

The ABC transporter domain maps to 13-254 (LEVNNLNFHY…PRLQRTEDYI (242 aa)). 45–52 (GPSGCGKS) is a binding site for ATP.

The protein belongs to the ABC transporter superfamily. Phosphate importer (TC 3.A.1.7) family. As to quaternary structure, the complex is composed of two ATP-binding proteins (PstB), two transmembrane proteins (PstC and PstA) and a solute-binding protein (PstS).

Its subcellular location is the cell inner membrane. The catalysed reaction is phosphate(out) + ATP + H2O = ADP + 2 phosphate(in) + H(+). Part of the ABC transporter complex PstSACB involved in phosphate import. Responsible for energy coupling to the transport system. This chain is Phosphate import ATP-binding protein PstB, found in Pasteurella multocida (strain Pm70).